The primary structure comprises 310 residues: Thiamine-monophosphate kinase (310 aa).

Positions 24, 38, and 39 each coordinate Mg(2+). Position 46 (Asp46) interacts with substrate. Positions 67 and 115 each coordinate Mg(2+). Residues Gly114 to Asp115 and Arg138 contribute to the ATP site. Asp203 is a binding site for Mg(2+). Ser205 contributes to the ATP binding site. Residue Asp206 coordinates Mg(2+). Residues Glu251 and Trp306 each contribute to the substrate site.

This sequence belongs to the thiamine-monophosphate kinase family.

It catalyses the reaction thiamine phosphate + ATP = thiamine diphosphate + ADP. It functions in the pathway cofactor biosynthesis; thiamine diphosphate biosynthesis; thiamine diphosphate from thiamine phosphate: step 1/1. In terms of biological role, catalyzes the ATP-dependent phosphorylation of thiamine-monophosphate (TMP) to form thiamine-pyrophosphate (TPP), the active form of vitamin B1. The protein is Thiamine-monophosphate kinase of Nitrosopumilus maritimus (strain SCM1).